The sequence spans 560 residues: Dihydroxy-acid dehydratase (560 aa).

Residue aspartate 80 participates in Mg(2+) binding. Position 121 (cysteine 121) interacts with [2Fe-2S] cluster. 2 residues coordinate Mg(2+): aspartate 122 and lysine 123. An N6-carboxylysine modification is found at lysine 123. Residue cysteine 194 coordinates [2Fe-2S] cluster. Glutamate 447 contributes to the Mg(2+) binding site. Serine 473 (proton acceptor) is an active-site residue.

Belongs to the IlvD/Edd family. In terms of assembly, homodimer. [2Fe-2S] cluster serves as cofactor. Mg(2+) is required as a cofactor.

It catalyses the reaction (2R)-2,3-dihydroxy-3-methylbutanoate = 3-methyl-2-oxobutanoate + H2O. The enzyme catalyses (2R,3R)-2,3-dihydroxy-3-methylpentanoate = (S)-3-methyl-2-oxopentanoate + H2O. The protein operates within amino-acid biosynthesis; L-isoleucine biosynthesis; L-isoleucine from 2-oxobutanoate: step 3/4. It functions in the pathway amino-acid biosynthesis; L-valine biosynthesis; L-valine from pyruvate: step 3/4. Its function is as follows. Functions in the biosynthesis of branched-chain amino acids. Catalyzes the dehydration of (2R,3R)-2,3-dihydroxy-3-methylpentanoate (2,3-dihydroxy-3-methylvalerate) into 2-oxo-3-methylpentanoate (2-oxo-3-methylvalerate) and of (2R)-2,3-dihydroxy-3-methylbutanoate (2,3-dihydroxyisovalerate) into 2-oxo-3-methylbutanoate (2-oxoisovalerate), the penultimate precursor to L-isoleucine and L-valine, respectively. This Chlorobaculum tepidum (strain ATCC 49652 / DSM 12025 / NBRC 103806 / TLS) (Chlorobium tepidum) protein is Dihydroxy-acid dehydratase.